Here is a 425-residue protein sequence, read N- to C-terminus: 1,4-beta-D-glucan glucohydrolase (425 aa).

The Proton donor role is filled by E164. The active-site Nucleophile is E349.

This sequence belongs to the glycosyl hydrolase 1 family. As to quaternary structure, monomer.

It carries out the reaction Hydrolysis of (1-&gt;4)-linkages in (1-&gt;4)-beta-D-glucans, to remove successive glucose units.. The catalysed reaction is Hydrolysis of terminal, non-reducing beta-D-glucosyl residues with release of beta-D-glucose.. The protein operates within glycan metabolism; cellulose degradation. Its pathway is glycan metabolism; beta-D-glucan degradation. Broad substrate specificity glycosidase. Releases glucose from soluble glucooligomers, with a preference for longer oligomers; acts more readily on cellotetraose than on cellobiose. Displays similar activities towards the disaccharides lactose and cellobiose. Is also able to hydrolyze various aryl-beta-glycosides in vitro. The protein is 1,4-beta-D-glucan glucohydrolase (bglA) of Thermotoga neapolitana.